Reading from the N-terminus, the 124-residue chain is DRRQELSNENVLVKVSRRQLEELSKNAKSSSRRSVSSESGPFNLRSEDPLYSNNSGKFFELTPEKNQQLQDLDLFVNSVDLKEGSLLLPNYNSRALLVLVLVVNEGKGDFELVGQRNENQGKEN.

The tract at residues 23 to 57 (LSKNAKSSSRRSVSSESGPFNLRSEDPLYSNNSGK) is disordered. A glycan (N-linked (GlcNAc...) asparagine) is linked at Asn53.

The protein belongs to the 7S seed storage protein family.

It localises to the vacuole. Its subcellular location is the aleurone grain. In terms of biological role, seed storage protein. This chain is Vicilin, 14 kDa component, found in Pisum sativum (Garden pea).